Here is a 1512-residue protein sequence, read N- to C-terminus: Sterol 3-beta-glucosyltransferase (1512 aa).

Disordered regions lie at residues 22–50 (FSGS…YHSL) and 150–222 (DEHT…DTDV). Acidic residues predominate over residues 156 to 169 (SEEEDSADKEEESI). Positions 190 to 222 (TTATLITTQITRTKTATTATPTPTPTSSVDTDV) are enriched in low complexity. One can recognise a GRAM 1 domain in the interval 296–331 (LQRVFDLSDEDTFCGNYSAWLIKDVLLQGHVYLTKD). Positions 359 to 520 (SIVYSGNLGL…WCNNITKLIF (162 aa)) constitute a PH domain. The region spanning 816-880 (RNFQSHFSTN…TDIEEVRASR (65 aa)) is the GRAM 2 domain. UDP-alpha-D-glucose-binding residues include Ser1024, Arg1025, Asp1027, Asn1299, Ile1328, His1330, His1343, Ser1346, Gly1347, Thr1348, Asp1367, and Gln1368. The segment at 1450-1512 (YKRHHPVPSG…NNSPSQNSSN (63 aa)) is disordered. A compositionally biased stretch (acidic residues) spans 1467–1493 (TDSDDYDDDEDDDESDKDDEEEEEENS). The segment covering 1501 to 1512 (GVNNSPSQNSSN) has biased composition (polar residues).

The protein belongs to the glycosyltransferase 28 family.

The protein resides in the cytoplasm. The protein localises to the membrane. The catalysed reaction is a sterol + UDP-alpha-D-glucose = a sterol 3-beta-D-glucoside + UDP + H(+). It catalyses the reaction ergosterol + UDP-alpha-D-glucose = ergosteryl 3-beta-D-glucoside + UDP + H(+). Sterol glycosyltransferase responsible for the glycosylation of ergosterol to form ergosterol-glucoside. The protein is Sterol 3-beta-glucosyltransferase of Candida albicans (strain SC5314 / ATCC MYA-2876) (Yeast).